Here is a 201-residue protein sequence, read N- to C-terminus: 3-isopropylmalate dehydratase small subunit (201 aa).

It belongs to the LeuD family. LeuD type 1 subfamily. As to quaternary structure, heterodimer of LeuC and LeuD.

It carries out the reaction (2R,3S)-3-isopropylmalate = (2S)-2-isopropylmalate. The protein operates within amino-acid biosynthesis; L-leucine biosynthesis; L-leucine from 3-methyl-2-oxobutanoate: step 2/4. Functionally, catalyzes the isomerization between 2-isopropylmalate and 3-isopropylmalate, via the formation of 2-isopropylmaleate. The protein is 3-isopropylmalate dehydratase small subunit of Cereibacter sphaeroides (strain KD131 / KCTC 12085) (Rhodobacter sphaeroides).